An 887-amino-acid polypeptide reads, in one-letter code: Alanine--tRNA ligase (887 aa).

Zn(2+)-binding residues include His-581, His-585, Cys-683, and His-687.

It belongs to the class-II aminoacyl-tRNA synthetase family. Zn(2+) serves as cofactor.

The protein localises to the cytoplasm. It carries out the reaction tRNA(Ala) + L-alanine + ATP = L-alanyl-tRNA(Ala) + AMP + diphosphate. Catalyzes the attachment of alanine to tRNA(Ala) in a two-step reaction: alanine is first activated by ATP to form Ala-AMP and then transferred to the acceptor end of tRNA(Ala). Also edits incorrectly charged Ser-tRNA(Ala) and Gly-tRNA(Ala) via its editing domain. The polypeptide is Alanine--tRNA ligase (Ehrlichia ruminantium (strain Welgevonden)).